Consider the following 163-residue polypeptide: Large ribosomal subunit protein bL19 (163 aa).

A compositionally biased stretch (basic and acidic residues) spans 131 to 150; that stretch reads ISQERKASGKDQASKPEVRP. The segment at 131–163 is disordered; that stretch reads ISQERKASGKDQASKPEVRPQGKKPAPKPKAKK. Over residues 151-163 the composition is skewed to basic residues; that stretch reads QGKKPAPKPKAKK.

This sequence belongs to the bacterial ribosomal protein bL19 family.

This protein is located at the 30S-50S ribosomal subunit interface and may play a role in the structure and function of the aminoacyl-tRNA binding site. This Rhodospirillum rubrum (strain ATCC 11170 / ATH 1.1.1 / DSM 467 / LMG 4362 / NCIMB 8255 / S1) protein is Large ribosomal subunit protein bL19.